The sequence spans 452 residues: Chromosomal replication initiator protein DnaA (452 aa).

Residues 1–85 (MSTTAWQKCL…IEVGSKPVEA (85 aa)) are domain I, interacts with DnaA modulators. The interval 85 to 115 (AVDTPAETIVTSSSTAPLKSAPKKAVDYKSS) is domain II. Residues 116 to 332 (HLNKKFVFDS…GALRRVIANA (217 aa)) form a domain III, AAA+ region region. ATP-binding residues include G160, G162, K163, and T164. Residues 333–452 (HFTGKPITIE…YKNLMRILSS (120 aa)) are domain IV, binds dsDNA.

The protein belongs to the DnaA family. As to quaternary structure, oligomerizes as a right-handed, spiral filament on DNA at oriC.

It is found in the cytoplasm. Plays an essential role in the initiation and regulation of chromosomal replication. ATP-DnaA binds to the origin of replication (oriC) to initiate formation of the DNA replication initiation complex once per cell cycle. Binds the DnaA box (a 9 base pair repeat at the origin) and separates the double-stranded (ds)DNA. Forms a right-handed helical filament on oriC DNA; dsDNA binds to the exterior of the filament while single-stranded (ss)DNA is stabiized in the filament's interior. The ATP-DnaA-oriC complex binds and stabilizes one strand of the AT-rich DNA unwinding element (DUE), permitting loading of DNA polymerase. After initiation quickly degrades to an ADP-DnaA complex that is not apt for DNA replication. Binds acidic phospholipids. This Legionella pneumophila (strain Paris) protein is Chromosomal replication initiator protein DnaA.